The primary structure comprises 29 residues: KKIDTRTGKTMEKTEKKIELSLKNMKTAT.

It localises to the secreted. Its function is as follows. Has antibacterial activity against strains of L.monocytogenes, L.lactis, B.subtilis, S.typhi, S.aureus, C.perfringens, E.aerogenes and M.luteus but not against E.coli, S.sonnei, S.pneumoniae, S.faecalis, P.aeruginosa, K.pneumoniae or P.vulgaris. This is Bacteriocin from Lactococcus lactis subsp. lactis (Streptococcus lactis).